A 234-amino-acid polypeptide reads, in one-letter code: Probable chemoreceptor glutamine deamidase CheD (234 aa).

This sequence belongs to the CheD family.

It carries out the reaction L-glutaminyl-[protein] + H2O = L-glutamyl-[protein] + NH4(+). Functionally, probably deamidates glutamine residues to glutamate on methyl-accepting chemotaxis receptors (MCPs), playing an important role in chemotaxis. The chain is Probable chemoreceptor glutamine deamidase CheD from Burkholderia mallei (strain NCTC 10247).